Here is a 107-residue protein sequence, read N- to C-terminus: Universal stress protein B homolog (107 aa).

Helical transmembrane passes span 6 to 26 (TILF…LTAL) and 86 to 106 (VREL…AAFI).

It belongs to the universal stress protein B family.

The protein localises to the cell inner membrane. The polypeptide is Universal stress protein B homolog (Vibrio parahaemolyticus serotype O3:K6 (strain RIMD 2210633)).